The chain runs to 1077 residues: Mitogen-activated protein kinase kinase kinase 9 (1077 aa).

The tract at residues 1 to 40 (MESSRSLLGCLASATAAPPGDDATGAGAEEEEDEEEAAAE) is disordered. Over residues 14 to 27 (ATAAPPGDDATGAG) the composition is skewed to low complexity. The span at 28–38 (AEEEEDEEEAA) shows a compositional bias: acidic residues. Positions 45–109 (AALPYWTAVF…PSNYVTPRSA (65 aa)) constitute an SH3 domain. The Protein kinase domain maps to 137–405 (LTLEEIIGIG…LTTIEESGFF (269 aa)). ATP contacts are provided by residues 143–151 (IGIGGFGKV) and K164. D261 functions as the Proton acceptor in the catalytic mechanism. Phosphothreonine; by autocatalysis occurs at positions 297 and 298. Residue S301 is modified to Phosphoserine; by autocatalysis. T305 is modified (phosphothreonine; by autocatalysis). Leucine-zipper stretches follow at residues 423–444 (IQEM…EEEL) and 458–479 (LRRR…ELNI). Positions 491–503 (VKKRKGKFRKSRL) are enriched in basic residues. Disordered regions lie at residues 491 to 511 (VKKR…GNRI), 526 to 606 (SPTM…TSGD), 646 to 713 (EDED…KRGG), 748 to 790 (LPPE…KKEE), 860 to 971 (RDPN…PRPS), and 986 to 1011 (SHAR…CFAS). S526 carries the phosphoserine modification. 2 stretches are compositionally biased toward polar residues: residues 559 to 568 (PGESSKTWGR) and 693 to 709 (PVNS…TNSL). Basic and acidic residues predominate over residues 755 to 767 (PPAREEKKRREGL). Over residues 863–880 (NQSLTPTHVTLTAPTQPS) the composition is skewed to polar residues. Residues 901-915 (GSRSPSSNGMSPSPG) are compositionally biased toward low complexity. The span at 987–1011 (HARSASPANSSSTETPSNLDSCFAS) shows a compositional bias: polar residues.

The protein belongs to the protein kinase superfamily. STE Ser/Thr protein kinase family. MAP kinase kinase kinase subfamily. In terms of assembly, homodimer. Mg(2+) serves as cofactor. Post-translationally, autophosphorylation on serine and threonine residues within the activation loop plays a role in enzyme activation. Thr-305 is likely to be the main autophosphorylation site. Autophosphorylation also occurs on Thr-297 and Ser-301. In terms of tissue distribution, expressed in cochlea and utricle.

The catalysed reaction is L-seryl-[protein] + ATP = O-phospho-L-seryl-[protein] + ADP + H(+). The enzyme catalyses L-threonyl-[protein] + ATP = O-phospho-L-threonyl-[protein] + ADP + H(+). Homodimerization via the leucine zipper domains is required for autophosphorylation of multiple sites in the activation loop and subsequent activation. Autophosphorylation at Thr-305 is the key step in activation of MAP3K9/MLK1 and is required for full phosphorylation. Autophosphorylation at Thr-297 and Ser-301 have been shown to be of secondary importance in the activation of MAP3K9/MLK1. Functionally, serine/threonine kinase which acts as an essential component of the MAP kinase signal transduction pathway. Plays an important role in the cascades of cellular responses evoked by changes in the environment. Once activated, acts as an upstream activator of the MKK/JNK signal transduction cascade through the phosphorylation of MAP2K4/MKK4 and MAP2K7/MKK7 which in turn activate the JNKs. The MKK/JNK signaling pathway regulates stress response via activator protein-1 (JUN) and GATA4 transcription factors. Also plays a role in mitochondrial death signaling pathway, including the release cytochrome c, leading to apoptosis. The protein is Mitogen-activated protein kinase kinase kinase 9 (Map3k9) of Mus musculus (Mouse).